Consider the following 193-residue polypeptide: Translocation protein SEC72 (193 aa).

Component of the heterotetrameric Sec62/63complex composed of SEC62, SEC63, SEC71 and SEC72. The Sec62/63 complex associates with the Sec61 complex to form the Sec complex. May interact with protein YLR301W. Part of a complex consisting of KAR2, SEC63, SEC66 and SEC72.

It localises to the cytoplasm. Its function is as follows. Acts as a non-essential component of the Sec62/63 complex which is involved in SRP-independent post-translational translocation across the endoplasmic reticulum (ER) and functions together with the Sec61 complex and KAR2 in a channel-forming translocon complex. A cycle of assembly and disassembly of Sec62/63 complex from SEC61 may govern the activity of the translocon. SEC72 may be involved in signal peptide recognition for a defined subset of leader peptides, or may increase the efficiency of unusual or 'difficult' secretory precursors to the translocation pore, it may be that this protein binds charged leader peptides to the membrane until they engage the translocation apparatus. This Saccharomyces cerevisiae (strain ATCC 204508 / S288c) (Baker's yeast) protein is Translocation protein SEC72 (SEC72).